A 387-amino-acid chain; its full sequence is 3-ketoacyl-CoA thiolase (387 aa).

Cysteine 91 functions as the Acyl-thioester intermediate in the catalytic mechanism. Residues histidine 343 and cysteine 373 each act as proton acceptor in the active site.

It belongs to the thiolase-like superfamily. Thiolase family. Heterotetramer of two alpha chains (FadB) and two beta chains (FadA).

The protein localises to the cytoplasm. It catalyses the reaction an acyl-CoA + acetyl-CoA = a 3-oxoacyl-CoA + CoA. It functions in the pathway lipid metabolism; fatty acid beta-oxidation. Its function is as follows. Catalyzes the final step of fatty acid oxidation in which acetyl-CoA is released and the CoA ester of a fatty acid two carbons shorter is formed. In Escherichia coli (strain UTI89 / UPEC), this protein is 3-ketoacyl-CoA thiolase.